Consider the following 208-residue polypeptide: Uracil phosphoribosyltransferase (208 aa).

5-phospho-alpha-D-ribose 1-diphosphate contacts are provided by residues Arg-78, Arg-103, and 130-138 (DPMLATGGS). Residues Ile-193 and 198 to 200 (GDA) each bind uracil. A 5-phospho-alpha-D-ribose 1-diphosphate-binding site is contributed by Asp-199.

The protein belongs to the UPRTase family. Mg(2+) serves as cofactor.

It catalyses the reaction UMP + diphosphate = 5-phospho-alpha-D-ribose 1-diphosphate + uracil. Its pathway is pyrimidine metabolism; UMP biosynthesis via salvage pathway; UMP from uracil: step 1/1. Allosterically activated by GTP. Functionally, catalyzes the conversion of uracil and 5-phospho-alpha-D-ribose 1-diphosphate (PRPP) to UMP and diphosphate. The sequence is that of Uracil phosphoribosyltransferase from Roseiflexus castenholzii (strain DSM 13941 / HLO8).